A 662-amino-acid polypeptide reads, in one-letter code: Rap guanine nucleotide exchange factor-like 1 (662 aa).

The interval 1 to 149 is disordered; the sequence is MKPLEKFLKK…PPWAPLGAPE (149 aa). A compositionally biased stretch (gly residues) spans 20 to 48; it reads VAGGPGGGLGSCGGPGGGGGPGGGGGPAG. A compositionally biased stretch (low complexity) spans 49–64; sequence GQRSLQRRQSVSRLLL. The span at 73 to 82 shows a compositional bias: pro residues; sequence AEPGLEPPVP. Over residues 120-135 the composition is skewed to low complexity; sequence LRSPSSYSSDELSPGE. One can recognise a Ras-GEF domain in the interval 424–660; the sequence is EPEDVANHLT…FELSYKLEAN (237 aa).

Probable guanine nucleotide exchange factor (GEF). This Homo sapiens (Human) protein is Rap guanine nucleotide exchange factor-like 1 (RAPGEFL1).